The chain runs to 446 residues: Putative ankyrin repeat protein L273 (446 aa).

ANK repeat units follow at residues 71-100 (NGEF…KSNM), 124-153 (DHNK…RMRP), 206-237 (TDIE…KILM), 245-277 (VWVS…KMHV), 303-332 (ELEY…NSYY), and 365-394 (YTDI…QQII).

This chain is Putative ankyrin repeat protein L273, found in Acanthamoeba polyphaga (Amoeba).